The chain runs to 425 residues: Enolase (425 aa).

Residue Gln-170 coordinates (2R)-2-phosphoglycerate. The Proton donor role is filled by Glu-214. 3 residues coordinate Mg(2+): Asp-250, Glu-291, and Asp-317. (2R)-2-phosphoglycerate-binding residues include Lys-342, Arg-371, Ser-372, and Lys-393. Lys-342 (proton acceptor) is an active-site residue.

Belongs to the enolase family. Requires Mg(2+) as cofactor.

The protein localises to the cytoplasm. Its subcellular location is the secreted. It localises to the cell surface. The enzyme catalyses (2R)-2-phosphoglycerate = phosphoenolpyruvate + H2O. It participates in carbohydrate degradation; glycolysis; pyruvate from D-glyceraldehyde 3-phosphate: step 4/5. Functionally, catalyzes the reversible conversion of 2-phosphoglycerate (2-PG) into phosphoenolpyruvate (PEP). It is essential for the degradation of carbohydrates via glycolysis. In Methanococcoides burtonii (strain DSM 6242 / NBRC 107633 / OCM 468 / ACE-M), this protein is Enolase.